Here is a 157-residue protein sequence, read N- to C-terminus: AM-toxin biosynthesis protein 15 (157 aa).

The disordered stretch occupies residues 17–43; sequence RARHWDSKQGSSNSDVASGGSEVAGNS.

It functions in the pathway mycotoxin biosynthesis. Its function is as follows. Part of the gene clusters that mediate the biosynthesis of AM-toxins, host-selective toxins (HSTs) causing Alternaria blotch on apple, a worldwide distributed disease. AM-toxins are cyclic depsipeptides containing the 3 residues 2-hydroxy-isovaleric acid (2-HIV), dehydroalanine, L-alanine which are common for all 3 AM-toxins I to III. The fourth precursor is L-alpha-amino-methoxyphenyl-valeric acid (L-Amv) for AM-toxin I, L-alpha-amino-phenyl-valeric acid (L-Apv) for AM-toxin II, and L-alpha-amino-hydroxyphenyl-valeric acid (L-Ahv) for AM-toxin III. AM-toxins have two target sites for affecting susceptible apple cells; they cause invagination of the plasma membrane and electrolyte loss and chloroplast disorganization. The non-ribosomal peptide synthetase AMT1 contains 4 catalytic modules and is responsible for activation of each residue in AM-toxin. The aldo-keto reductase AMT2 catalyzes the conversion of 2-keto-isovaleric acid (2-KIV) to 2-hydroxy-isovaleric acid (2-HIV), one of the precursor residues incorporated by AMT1 during AM-toxin biosynthesis, by reduction of its ketone to an alcohol. The cytochrome P450 monooxygenase AMT3 and the thioesterase AMT4 are also important for AM-toxin production, but their exact function within the AM-toxin biosynthesis are not known yet. Up to 21 proteins (including AMT1 to AMT4) are predicted to be involved in AM-toxin biosynthesis since their expression ishighly up-regulated in AM-toxin-producing cultures. The polypeptide is AM-toxin biosynthesis protein 15 (Alternaria alternata (Alternaria rot fungus)).